A 475-amino-acid chain; its full sequence is Fez family zinc finger protein 1 (475 aa).

The short motif at 28–43 (PLAFSIERIMARTPEP) is the Engrailed homology 1 repressor element. 6 C2H2-type zinc fingers span residues 260-282 (FTCE…MPVH), 288-310 (FVCK…KIIH), 316-338 (HKCN…TRIH), 344-366 (FVCE…KLTH), 372-394 (FKCN…MHTH), and 400-423 (FTCP…RKLH). Residues 425–475 (SSLGLTRTPTGEPSSDPPPQLQQPPPAPLPPLQPTLPPPGPLPSGLHQGHQ) are disordered. Polar residues predominate over residues 427–437 (LGLTRTPTGEP). A compositionally biased stretch (pro residues) spans 439 to 466 (SDPPPQLQQPPPAPLPPLQPTLPPPGPL).

Belongs to the krueppel C2H2-type zinc-finger protein family.

The protein resides in the nucleus. In terms of biological role, transcription repressor. Involved in the axonal projection and proper termination of olfactory sensory neurons (OSN). Plays a role in rostro-caudal patterning of the diencephalon and in prethalamic formation. Expression is required in OSN to cell-autonomously regulate OSN axon projections. Regulates non-cell-autonomously the layer formation of the olfactory bulb development and the interneurons. May be required for correct rostral migration of the interneuron progenitors. In Mus musculus (Mouse), this protein is Fez family zinc finger protein 1 (Fezf1).